The sequence spans 441 residues: ATP-dependent protease ATPase subunit HslU (441 aa).

Residues Ile18, 60-65, Asp254, Glu319, and Arg391 each bind ATP; that span reads GVGKTE.

The protein belongs to the ClpX chaperone family. HslU subfamily. A double ring-shaped homohexamer of HslV is capped on each side by a ring-shaped HslU homohexamer. The assembly of the HslU/HslV complex is dependent on binding of ATP.

Its subcellular location is the cytoplasm. In terms of biological role, ATPase subunit of a proteasome-like degradation complex; this subunit has chaperone activity. The binding of ATP and its subsequent hydrolysis by HslU are essential for unfolding of protein substrates subsequently hydrolyzed by HslV. HslU recognizes the N-terminal part of its protein substrates and unfolds these before they are guided to HslV for hydrolysis. The polypeptide is ATP-dependent protease ATPase subunit HslU (Shewanella pealeana (strain ATCC 700345 / ANG-SQ1)).